Consider the following 219-residue polypeptide: Octanoyltransferase (219 aa).

One can recognise a BPL/LPL catalytic domain in the interval 37-219 (EHSPDQLWIL…DFNDVQVILQ (183 aa)). Residues 76 to 83 (RGGQVTWH), 143 to 145 (SLG), and 156 to 158 (GLA) contribute to the substrate site. C174 functions as the Acyl-thioester intermediate in the catalytic mechanism.

The protein belongs to the LipB family.

It localises to the cytoplasm. The enzyme catalyses octanoyl-[ACP] + L-lysyl-[protein] = N(6)-octanoyl-L-lysyl-[protein] + holo-[ACP] + H(+). The protein operates within protein modification; protein lipoylation via endogenous pathway; protein N(6)-(lipoyl)lysine from octanoyl-[acyl-carrier-protein]: step 1/2. Its function is as follows. Catalyzes the transfer of endogenously produced octanoic acid from octanoyl-acyl-carrier-protein onto the lipoyl domains of lipoate-dependent enzymes. Lipoyl-ACP can also act as a substrate although octanoyl-ACP is likely to be the physiological substrate. This chain is Octanoyltransferase, found in Acinetobacter baylyi (strain ATCC 33305 / BD413 / ADP1).